The chain runs to 169 residues: Gastrula zinc finger protein XlCGF62.1 (169 aa).

6 C2H2-type zinc fingers span residues 6-28, 34-56, 62-84, 90-113, 119-141, and 147-169; these read FICT…IRTH, FICT…YKTH, FICT…HRSH, FTCT…QAIH, FICT…KRTH, and FVCT…KRTH.

The protein belongs to the krueppel C2H2-type zinc-finger protein family.

The protein localises to the nucleus. May be involved in transcriptional regulation. The polypeptide is Gastrula zinc finger protein XlCGF62.1 (Xenopus laevis (African clawed frog)).